The primary structure comprises 252 residues: MDKRLWVGVVSIFPEMFRAISDYGITSRAVKQGLLTLTCWNPRDYTEDRHQTVDDRPFGGGPGMVMKIKPLEGALADARQAAGGRKAKVIYLSPQGRQLTQAGVRELAEEEALILIAGRYEGIDERFIEEHVDEEWSIGDYVLSGGELPAMVLVDAVTRLLPGALGHADSAEEDSFTDGLLDCPHYTRPEVYADKRVPEVLLSGNHEHIRRWRLQQALGRTWERRADLLDSRSLSGEEQKLLAEYIRQRDDS.

S-adenosyl-L-methionine is bound by residues glycine 118 and 138-143 (IGDYVL).

It belongs to the RNA methyltransferase TrmD family. As to quaternary structure, homodimer.

Its subcellular location is the cytoplasm. It catalyses the reaction guanosine(37) in tRNA + S-adenosyl-L-methionine = N(1)-methylguanosine(37) in tRNA + S-adenosyl-L-homocysteine + H(+). Functionally, specifically methylates guanosine-37 in various tRNAs. This Pseudomonas paraeruginosa (strain DSM 24068 / PA7) (Pseudomonas aeruginosa (strain PA7)) protein is tRNA (guanine-N(1)-)-methyltransferase.